The following is a 21-amino-acid chain: Protein YmjD (21 aa).

In Escherichia coli (strain K12), this protein is Protein YmjD (ymjD).